A 585-amino-acid chain; its full sequence is Cyclic nucleotide-binding domain-containing protein 2 (585 aa).

116 to 239 lines the a nucleoside 3',5'-cyclic phosphate pocket; the sequence is SYRNYAEPLQ…DAQYRFEFFR (124 aa).

The protein resides in the cytoplasm. It is found in the cytosol. Its function is as follows. Essential for male fertility. Plays an important role in spermatogenesis and regulates sperm motility by controlling the development of the flagellar bending of sperm. The protein is Cyclic nucleotide-binding domain-containing protein 2 (CNBD2) of Macaca fascicularis (Crab-eating macaque).